A 270-amino-acid polypeptide reads, in one-letter code: Phosphatidylglycerol--prolipoprotein diacylglyceryl transferase (270 aa).

7 helical membrane-spanning segments follow: residues 14 to 34 (VAFTLFGFSVHWYGIMYILAL), 60 to 80 (YFFWVEIGVILGARLGYIAIY), 103 to 123 (FVGIRGMSYHGAVVGFLLATI), 133 to 153 (LWQLLDLCALCIPFGYIFGRI), 181 to 201 (PSQLYEAALEGLAVFLILFFY), 209 to 229 (GELIALYAVLYTLARFVCEFF), and 235 to 255 (GIGFIIFGLSMGQILSILMFF). Position 152 (R152) interacts with a 1,2-diacyl-sn-glycero-3-phospho-(1'-sn-glycerol).

It belongs to the Lgt family.

It localises to the cell inner membrane. It carries out the reaction L-cysteinyl-[prolipoprotein] + a 1,2-diacyl-sn-glycero-3-phospho-(1'-sn-glycerol) = an S-1,2-diacyl-sn-glyceryl-L-cysteinyl-[prolipoprotein] + sn-glycerol 1-phosphate + H(+). It functions in the pathway protein modification; lipoprotein biosynthesis (diacylglyceryl transfer). Functionally, catalyzes the transfer of the diacylglyceryl group from phosphatidylglycerol to the sulfhydryl group of the N-terminal cysteine of a prolipoprotein, the first step in the formation of mature lipoproteins. The sequence is that of Phosphatidylglycerol--prolipoprotein diacylglyceryl transferase from Campylobacter curvus (strain 525.92).